Here is a 463-residue protein sequence, read N- to C-terminus: MAQVSINSDYSEWGSSTDAGERARLLQSPCVDVVPKREGEASPGDPDSGTTSTLGAVFIVVNACLGAGLLNFPAAFSTAGGVAAGIALQMGMLVFIISGLVILAYCSQASNERTYQEVVWAVCGKLTGVLCEIAIAVYTFGTCIAFLIIIGDQQDKIIAVMAKEPDGASGSPWYTDRKFTISLTAFLFILPLSIPKEIGFQKYASSLSVVGTWYVTAIVIIKYIWPDKEMRPGDILTRPASWMAVFNAMPTICFGFQCHVSSVPVFNSMRQPQVKTWGGVVTAAMVIALAVYMGTGICGFLTFGAAVDPDVLRSYPSEDVAVAVARAFIILSVLTSYPILHFCGRAVVEGLWLRYKGTPVEEDVGRERRRRVLQTLVWFLLTLLLALFIPDIGKVISVIGGLAACFIFIFPGLCLIQAKLSEMEEVKPASWWALVSYGVLLVTLGAFIFGQTTANAVFVDLLA.

Serine 28 is modified (phosphoserine). 11 consecutive transmembrane segments (helical) span residues 56–76 (AVFI…PAAF), 82–102 (VAAG…GLVI), 130–150 (LCEI…LIII), 179–199 (FTIS…KEIG), 206–226 (SLSV…YIWP), 240–260 (ASWM…QCHV), 283–303 (AAMV…FLTF), 320–340 (VAVA…YPIL), 372–392 (VLQT…IPDI), 396–416 (ISVI…LCLI), and 429–449 (ASWW…AFIF).

This sequence belongs to the amino acid/polyamine transporter 2 family. Interacts with the mTORC1 complex; this interaction mediates the recruitment of mTORC1 to the lysosome and its subsequent activation.

Its subcellular location is the lysosome membrane. The protein localises to the cell projection. It is found in the axon. It catalyses the reaction L-asparagine(in) + Na(+)(in) = L-asparagine(out) + Na(+)(out). The enzyme catalyses L-glutamine(in) + Na(+)(in) = L-glutamine(out) + Na(+)(out). Symporter that selectively cotransports sodium ions and amino acids, such as L-glutamine and L-asparagine from the lysosome into the cytoplasm and may participates in mTORC1 activation. The transport activity requires an acidic lysosomal lumen. This Rattus norvegicus (Rat) protein is Sodium-coupled neutral amino acid transporter 7.